The primary structure comprises 71 residues: uncharacterized protein (71 aa).

The N-terminal stretch at 1–21 (MGVGLHGDHVGGELNSANAFT) is a signal peptide.

This is an uncharacterized protein from Haemophilus influenzae (strain ATCC 51907 / DSM 11121 / KW20 / Rd).